A 132-amino-acid polypeptide reads, in one-letter code: Gonadotropin subunit beta-1 (132 aa).

Residues 1–17 (MMRGVTMVLLLPMLVWA) form the signal peptide. 5 disulfides stabilise this stretch: cysteine 25–cysteine 73, cysteine 39–cysteine 88, cysteine 50–cysteine 104, cysteine 54–cysteine 106, and cysteine 109–cysteine 116. N-linked (GlcNAc...) asparagine glycans are attached at residues asparagine 29 and asparagine 46.

Belongs to the glycoprotein hormones subunit beta family. As to quaternary structure, heterodimer of an alpha and a beta chain.

The protein resides in the secreted. Functionally, involved in gametogenesis and steroidogenesis. This chain is Gonadotropin subunit beta-1 (cgba), found in Ictalurus punctatus (Channel catfish).